Consider the following 63-residue polypeptide: Arabinogalactan protein 41 (63 aa).

The first 27 residues, 1–27, serve as a signal peptide directing secretion; it reads MSGSRLFFGVSTIVSIIFAILLPMAHA. Glutamine 28 carries the post-translational modification Pyrrolidone carboxylic acid. Residues proline 32, proline 34, and proline 36 each carry the 4-hydroxyproline modification. O-linked (Ara...) hydroxyproline glycans are attached at residues proline 32, proline 34, and proline 36. Serine 38 carries GPI-anchor amidated serine lipidation. A propeptide spans 39–63 (removed in mature form); it reads DGTTIDQGIAYVLMLVALVLTYLIH.

This sequence belongs to the AG-peptide AGP family. In terms of processing, contains 4-hydroxyproline; hydroxylated on Pro-32, Pro-34 and Pro-36. O-glycosylated on hydroxyprolines; noncontiguous hydroxylproline residues are glycosylated with arabinogalactan.

Its subcellular location is the cell membrane. Functionally, proteoglycan that seems to be implicated in diverse developmental roles such as differentiation, cell-cell recognition, embryogenesis and programmed cell death. This chain is Arabinogalactan protein 41, found in Arabidopsis thaliana (Mouse-ear cress).